The following is a 764-amino-acid chain: Hemocyte protein-glutamine gamma-glutamyltransferase (764 aa).

Active-site residues include Cys-343, His-402, and Asp-425. The Ca(2+) site is built by Asn-465, Asp-467, Glu-522, and Glu-527.

Belongs to the transglutaminase superfamily. Transglutaminase family. Ca(2+) is required as a cofactor. In terms of tissue distribution, mainly expressed in hemocytes, hepatopancreas, and gastric tissues. On the other hand nothing was detected in the heart, intestine and muscle.

The protein resides in the membrane. The catalysed reaction is L-glutaminyl-[protein] + L-lysyl-[protein] = [protein]-L-lysyl-N(6)-5-L-glutamyl-[protein] + NH4(+). Catalyzes the cross-linking of proteins and the conjugation of polyamines to proteins. This is Hemocyte protein-glutamine gamma-glutamyltransferase from Tachypleus tridentatus (Japanese horseshoe crab).